Reading from the N-terminus, the 80-residue chain is RNA-binding protein Hfq (80 aa).

Positions 10-69 (DPFLNTLRREHVPVSIYLVNGIKLQGQIESFDQYVVLLKNTVTQMVYKHAISTVVPARPV) constitute a Sm domain.

Belongs to the Hfq family. Homohexamer.

Functionally, RNA chaperone that binds small regulatory RNA (sRNAs) and mRNAs to facilitate mRNA translational regulation in response to envelope stress, environmental stress and changes in metabolite concentrations. Also binds with high specificity to tRNAs. This Azoarcus sp. (strain BH72) protein is RNA-binding protein Hfq.